A 293-amino-acid chain; its full sequence is Small ribosomal subunit protein uS3 (293 aa).

The KH type-2 domain maps to 39–107 (VREYLKAKLK…PVAVNIEEVR (69 aa)). The interval 210–293 (RNDLPAVETP…PATAADGKGE (84 aa)) is disordered. Over residues 219 to 238 (PRPEEERRPRGPRRDGRPGG) the composition is skewed to basic and acidic residues.

Belongs to the universal ribosomal protein uS3 family. As to quaternary structure, part of the 30S ribosomal subunit. Forms a tight complex with proteins S10 and S14.

In terms of biological role, binds the lower part of the 30S subunit head. Binds mRNA in the 70S ribosome, positioning it for translation. The sequence is that of Small ribosomal subunit protein uS3 from Paracidovorax citrulli (strain AAC00-1) (Acidovorax citrulli).